We begin with the raw amino-acid sequence, 341 residues long: NADH-ubiquinone oxidoreductase chain 2 (341 aa).

A run of 9 helical transmembrane segments spans residues 8 to 28 (ILFITIMIIGTLITVTSNSWL), 60 to 80 (YFLTQVLASTVLLFSSILLML), 95 to 115 (MIIMSALLLKSGAAPFHFWFP), 121 to 141 (LTWMNALMLMTWQKIAPLMLI), 146 to 166 (IKYLLLISVILSVIIGAIGGL), 195 to 215 (SIWLIYFFFYSFLSFVLTFMF), 238 to 258 (FTLFMNFLSLGGLPPFLGFLP), 273 to 293 (FMLTLMMMSTLITLFFYLRIC), and 321 to 341 (MIMTFFSIFGLFLISLFYFMF).

Belongs to the complex I subunit 2 family.

The protein resides in the mitochondrion inner membrane. The catalysed reaction is a ubiquinone + NADH + 5 H(+)(in) = a ubiquinol + NAD(+) + 4 H(+)(out). Its function is as follows. Core subunit of the mitochondrial membrane respiratory chain NADH dehydrogenase (Complex I) that is believed to belong to the minimal assembly required for catalysis. Complex I functions in the transfer of electrons from NADH to the respiratory chain. The immediate electron acceptor for the enzyme is believed to be ubiquinone. This Drosophila melanogaster (Fruit fly) protein is NADH-ubiquinone oxidoreductase chain 2 (mt:ND2).